Consider the following 278-residue polypeptide: MGNVIRVQHLNYTYPEAKQQALTDVSFDVAKGEWLAIIGHNGSGKSTLAKNLNGLLAPESGTVQVAGMTLSEETVWDIRAKVGIVFQNPDNQFVGATVADDVAFGLENRGVPRPEMIKRVDEALDRVGMTAFADREPARLSGGQKQRVAIAGIVAQRPEIIILDESTSMLDPAGRQEVLGVIRELKDELGLTVLSITHDIDEAAEAHRIILLNDGKINEIGTPSEIFSHGMELLRLGLDVPYSEKLKDALAQRGIAMPKDYMDNERLVDYLWTLHSTM.

One can recognise an ABC transporter domain in the interval 5 to 239 (IRVQHLNYTY…GMELLRLGLD (235 aa)). 39–46 (GHNGSGKS) lines the ATP pocket. Glu165 (proton acceptor) is an active-site residue.

It belongs to the ABC transporter superfamily. Energy-coupling factor EcfA family. Forms a stable energy-coupling factor (ECF) transporter complex probably composed of 2 membrane-embedded substrate-binding proteins (S component), 2 ATP-binding proteins (A component) and 2 transmembrane proteins (T component). This complex interacts with a number of substrate-specific components, including FolT and ThiT for 5-formyltetrahydrofolate and thiamine respectively.

The protein localises to the cell membrane. ATP-binding (A) component of a common energy-coupling factor (ECF) ABC-transporter complex. Unlike classic ABC transporters this ECF transporter provides the energy necessary to transport a number of different substrates including 5-formyltetrahydrofolate and thiamine. Expression of the complex plus FolT or ThiT in Lactococcus lactis subsp. cremoris (strain NZ9000) allows 5-formyltetrahydrofolate or thiamine uptake respectively; 5-formyltetrahydrofolate or thiamine are not taken up in the absence of FolT/ThiT or the EcfA1A2T complex. Deenergized L.lactis subsp. cremoris (treated with 2-deoxyglucose) does not take up substrate. The sequence is that of Energy-coupling factor transporter ATP-binding protein EcfA1 from Lacticaseibacillus paracasei (strain ATCC 334 / BCRC 17002 / CCUG 31169 / CIP 107868 / KCTC 3260 / NRRL B-441) (Lactobacillus paracasei).